We begin with the raw amino-acid sequence, 89 residues long: Small ribosomal subunit protein bS16 (89 aa).

This sequence belongs to the bacterial ribosomal protein bS16 family.

This Desulforamulus reducens (strain ATCC BAA-1160 / DSM 100696 / MI-1) (Desulfotomaculum reducens) protein is Small ribosomal subunit protein bS16.